The chain runs to 138 residues: ATP synthase epsilon chain (138 aa).

It belongs to the ATPase epsilon chain family. As to quaternary structure, F-type ATPases have 2 components, CF(1) - the catalytic core - and CF(0) - the membrane proton channel. CF(1) has five subunits: alpha(3), beta(3), gamma(1), delta(1), epsilon(1). CF(0) has three main subunits: a, b and c.

Its subcellular location is the cell inner membrane. Produces ATP from ADP in the presence of a proton gradient across the membrane. The chain is ATP synthase epsilon chain from Wigglesworthia glossinidia brevipalpis.